A 461-amino-acid chain; its full sequence is METLYNGTLSLGGKDQESTGFAWWSGNARLINLSGRLLGAHVAHAGLIVFWAGAMNLFEVAHFVPEKPMYEQGLILLPHLASLGYGVGPGGEVIDTFPYFVSGVLHLISSAVLGFGGVYHSLIGPETLEETFPFFGYTWKDKNKMTSILGFHLIILGFGAWLLVWKAMYFGGVYDTWAPGGGDTRIITNPTTNPAVIFGYLLKSPFGGDGWIVSVDNMEDIIGGHIWIGTLEIFGGIWHIFTQPWAWTRRAFVWSGEAYLSYSLGAIALMGFVACCMGWFNNTAYPSEFYGPTGPEASQSQAFTFLVRDQRLGANVASAQGPTGLGKYLMRSPTGEIIFGGETMRFWDFRGPWLEPLRGPNGLDLNKLKNDIQPWQERRAAEYMTHAPLGSLNSVGGVATEINSVNFVSPRSWLATSHFCLGFFFFVGHLWHAGRARAAAAGFEKGIDRLTEPVLSLKPLD.

Residues Met-1–Glu-2 constitute a propeptide that is removed on maturation. Thr-3 is subject to N-acetylthreonine. Position 3 is a phosphothreonine (Thr-3). The next 5 membrane-spanning stretches (helical) occupy residues Leu-57–Ala-81, Leu-122–Asn-143, Lys-166–Thr-188, Gln-243–Ser-263, and Trp-279–Ser-300. Glu-355 serves as a coordination point for [CaMn4O5] cluster. A helical membrane pass occupies residues Arg-435 to Pro-459.

This sequence belongs to the PsbB/PsbC family. PsbC subfamily. As to quaternary structure, PSII is composed of 1 copy each of membrane proteins PsbA, PsbB, PsbC, PsbD, PsbE, PsbF, PsbH, PsbI, PsbJ, PsbK, PsbL, PsbM, PsbT, PsbX, PsbY, PsbZ, Psb30/Ycf12, at least 3 peripheral proteins of the oxygen-evolving complex and a large number of cofactors. It forms dimeric complexes. Binds multiple chlorophylls and provides some of the ligands for the Ca-4Mn-5O cluster of the oxygen-evolving complex. It may also provide a ligand for a Cl- that is required for oxygen evolution. PSII binds additional chlorophylls, carotenoids and specific lipids. is required as a cofactor.

It localises to the plastid. The protein resides in the chloroplast thylakoid membrane. Functionally, one of the components of the core complex of photosystem II (PSII). It binds chlorophyll and helps catalyze the primary light-induced photochemical processes of PSII. PSII is a light-driven water:plastoquinone oxidoreductase, using light energy to abstract electrons from H(2)O, generating O(2) and a proton gradient subsequently used for ATP formation. The sequence is that of Photosystem II CP43 reaction center protein from Stigeoclonium helveticum (Green alga).